The following is a 64-amino-acid chain: Alpha-conotoxin SI (64 aa).

Positions 1 to 21 are cleaved as a signal peptide; sequence MGMRMMFTVFLLVVLATTVVS. A propeptide spanning residues 22 to 49 is cleaved from the precursor; it reads FPSDRASDGRDDEAKDERSDMHESDRKE. The disordered stretch occupies residues 23 to 47; it reads PSDRASDGRDDEAKDERSDMHESDR. Residues 26–47 are compositionally biased toward basic and acidic residues; that stretch reads RASDGRDDEAKDERSDMHESDR. 2 disulfide bridges follow: cysteine 51–cysteine 56 and cysteine 52–cysteine 62. Cysteine 62 bears the Cysteine amide mark.

The protein belongs to the conotoxin A superfamily. As to expression, expressed by the venom duct.

It localises to the secreted. Functionally, alpha-conotoxins act on postsynaptic membranes, they bind to the nicotinic acetylcholine receptors (nAChR) and thus inhibit them. Is active on muscle nAChR (IC(50)=113 nM on adult subtype (alpha-1-beta-1-gamma-delta/CHRNA1-CHRNB1-CHRNG-CHRND) and IC(50)=142 nM on fetal subtype (alpha-1-beta-1-delta-epsilon/CHRNA1-CHRNB1-CHRND-CHRNE)). On mice muscle receptors, its higher affinity site is the alpha/delta nAChR subunit interface. On Torpedo receptors, it does not distinguish between alpha/delta and alpha/gamma acetylcholine-binding sites. In vivo, causes paralysis followed by death when injected into goldfish. In contrast, has no effect on mice, when similar doses are intraperitoneally or intracerebrally injected. In Conus striatus (Striated cone), this protein is Alpha-conotoxin SI.